The sequence spans 250 residues: MSDKPTETVSVSESVATPAVAATEPAPSLPVVNPSSLPSGFEWWRQTMAYKTGFMSAEESVQYEQDRLIKERYAECLSCEKNKQWVMAYSPTVRFMKDQIEKIGGDISSNNVFCDHCDDFKAGGFHPKYGILVCQNHVKSRSHLEDTLAHEMVHYYDNTKFKVDWMNLKHHACSEIRASTLSGECRMMNELMKGKLARLTRGHQECAKRRAILSVMANPGCKDEAQATQVVNEVWDSCFNDTRPFDTIYR.

Histidine 150 contributes to the a divalent metal cation binding site. Glutamate 151 is an active-site residue. An a divalent metal cation-binding site is contributed by histidine 154.

The protein belongs to the peptidase M76 family.

The protein localises to the mitochondrion inner membrane. Its function is as follows. Has a dual role in the assembly of mitochondrial ATPase. Acts as a protease that removes N-terminal residues of mitochondrial ATPase CF(0) subunit 6 at the intermembrane space side. Also involved in the correct assembly of the membrane-embedded ATPase CF(0) particle, probably mediating association of subunit 6 with the subunit 9 ring. In Yarrowia lipolytica (strain CLIB 122 / E 150) (Yeast), this protein is Mitochondrial inner membrane protease ATP23 (ATP23).